The following is a 478-amino-acid chain: Glycogen synthase (478 aa).

Position 15 (lysine 15) interacts with ADP-alpha-D-glucose.

It belongs to the glycosyltransferase 1 family. Bacterial/plant glycogen synthase subfamily.

It catalyses the reaction [(1-&gt;4)-alpha-D-glucosyl](n) + ADP-alpha-D-glucose = [(1-&gt;4)-alpha-D-glucosyl](n+1) + ADP + H(+). It functions in the pathway glycan biosynthesis; glycogen biosynthesis. Functionally, synthesizes alpha-1,4-glucan chains using ADP-glucose. This Caldicellulosiruptor bescii (strain ATCC BAA-1888 / DSM 6725 / KCTC 15123 / Z-1320) (Anaerocellum thermophilum) protein is Glycogen synthase.